Reading from the N-terminus, the 472-residue chain is Carboxypeptidase Q (472 aa).

The signal sequence occupies residues 1–20 (MKFLLFMFVGVVHLLPLASG). Residues 21 to 44 (KAIYGNGPSQRTFQEIKEEIAHYG) constitute a propeptide that is removed on maturation. N-linked (GlcNAc...) asparagine glycosylation is found at Asn52, Asn61, and Asn179. His290 and Asp302 together coordinate Zn(2+). Glu336 serves as the catalytic Nucleophile. Glu337 contacts Zn(2+). 2 N-linked (GlcNAc...) asparagine glycosylation sites follow: Asn353 and Asn356. Asp364 serves as a coordination point for Zn(2+). Asn396 is a glycosylation site (N-linked (GlcNAc...) asparagine). His434 provides a ligand contact to Zn(2+).

This sequence belongs to the peptidase M28 family. In terms of assembly, homodimer. The monomeric form is inactive while the homodimer is active. N-glycosylated. The secreted form is modified by hybrid or complex type oligosaccharide chains.

It is found in the endoplasmic reticulum. It localises to the golgi apparatus. The protein localises to the lysosome. Its subcellular location is the secreted. Functionally, carboxypeptidase that may play an important role in the hydrolysis of circulating peptides. Catalyzes the hydrolysis of dipeptides with unsubstituted terminals into amino acids. May play a role in the liberation of thyroxine hormone from its thyroglobulin (Tg) precursor. The chain is Carboxypeptidase Q (CPQ) from Bos taurus (Bovine).